Reading from the N-terminus, the 89-residue chain is Small ribosomal subunit protein uS15 (89 aa).

This sequence belongs to the universal ribosomal protein uS15 family. Part of the 30S ribosomal subunit. Forms a bridge to the 50S subunit in the 70S ribosome, contacting the 23S rRNA.

Its function is as follows. One of the primary rRNA binding proteins, it binds directly to 16S rRNA where it helps nucleate assembly of the platform of the 30S subunit by binding and bridging several RNA helices of the 16S rRNA. Forms an intersubunit bridge (bridge B4) with the 23S rRNA of the 50S subunit in the ribosome. The chain is Small ribosomal subunit protein uS15 from Elusimicrobium minutum (strain Pei191).